Here is a 468-residue protein sequence, read N- to C-terminus: UDP-N-acetylmuramate--L-alanine ligase (468 aa).

Position 107–113 (107–113 (GTHGKTT)) interacts with ATP.

The protein belongs to the MurCDEF family.

The protein resides in the cytoplasm. It catalyses the reaction UDP-N-acetyl-alpha-D-muramate + L-alanine + ATP = UDP-N-acetyl-alpha-D-muramoyl-L-alanine + ADP + phosphate + H(+). It participates in cell wall biogenesis; peptidoglycan biosynthesis. Functionally, cell wall formation. This Roseiflexus sp. (strain RS-1) protein is UDP-N-acetylmuramate--L-alanine ligase.